Reading from the N-terminus, the 232-residue chain is Ribose-5-phosphate isomerase A (232 aa).

Substrate contacts are provided by residues threonine 28–threonine 31, aspartate 83–aspartate 86, and lysine 96–glycine 99. Glutamate 105 functions as the Proton acceptor in the catalytic mechanism. Lysine 123 contacts substrate.

Belongs to the ribose 5-phosphate isomerase family. Homodimer.

It carries out the reaction aldehydo-D-ribose 5-phosphate = D-ribulose 5-phosphate. It participates in carbohydrate degradation; pentose phosphate pathway; D-ribose 5-phosphate from D-ribulose 5-phosphate (non-oxidative stage): step 1/1. In terms of biological role, catalyzes the reversible conversion of ribose-5-phosphate to ribulose 5-phosphate. The sequence is that of Ribose-5-phosphate isomerase A from Rhodopseudomonas palustris (strain BisB5).